Reading from the N-terminus, the 393-residue chain is MAQENAAFSPGQEEPPRRRGRQRYVEKDGRCNVQQGNVRETYRYLTDLFTTLVDLQWRLSLLFFVLAYALTWLFFGAIWWLIAYGRGDLEHLEDTAWTPCVNNLNGFVAAFLFSIETETTIGYGHRVITDQCPEGIVLLLLQAILGSMVNAFMVGCMFVKISQPNKRAATLVFSSHAVVSLRDGRLCLMFRVGDLRSSHIVEASIRAKLIRSRQTLEGEFIPLHQTDLSVGFDTGDDRLFLVSPLVISHEIDAASPFWEASRRALERDDFEIVVILEGMVEATGMTCQARSSYLVDEVLWGHRFTSVLTLEDGFYEVDYASFHETFEVPTPSCSARELAEAAARLDAHLYWSIPSRLDEKVEEEGAGEGAGGEAGADKEQNGCLPPPESESKV.

A disordered region spans residues 1 to 23 (MAQENAAFSPGQEEPPRRRGRQR). Over 1–57 (MAQENAAFSPGQEEPPRRRGRQRYVEKDGRCNVQQGNVRETYRYLTDLFTTLVDLQW) the chain is Cytoplasmic. A helical transmembrane segment spans residues 58–82 (RLSLLFFVLAYALTWLFFGAIWWLI). Residues 83 to 106 (AYGRGDLEHLEDTAWTPCVNNLNG) are Extracellular-facing. The helical; Pore-forming intramembrane region spans 107–118 (FVAAFLFSIETE). Residues 119-125 (TTIGYGH) constitute an intramembrane region (pore-forming). Positions 120–125 (TIGYGH) match the Selectivity filter motif. The Extracellular segment spans residues 126–134 (RVITDQCPE). A helical transmembrane segment spans residues 135–156 (GIVLLLLQAILGSMVNAFMVGC). Residues 157–393 (MFVKISQPNK…LPPPESESKV (237 aa)) lie on the Cytoplasmic side of the membrane. The interval 360–393 (KVEEEGAGEGAGGEAGADKEQNGCLPPPESESKV) is disordered. Over residues 384–393 (LPPPESESKV) the composition is skewed to pro residues. The PDZ-binding signature appears at 390–393 (ESKV).

This sequence belongs to the inward rectifier-type potassium channel (TC 1.A.2.1) family. KCNJ9 subfamily. In terms of assembly, associates with KCNJ3/GIRK1 to form a G-protein-activated heteromultimer pore-forming unit. Interacts (via PDZ-binding motif) with SNX27 (via PDZ domain); the interaction is required when endocytosed to prevent degradation in lysosomes and promote recycling to the plasma membrane.

It is found in the membrane. It catalyses the reaction K(+)(in) = K(+)(out). Functionally, inward rectifier potassium channels are characterized by a greater tendency to allow potassium to flow into the cell rather than out of it. Their voltage dependence is regulated by the concentration of extracellular potassium; as external potassium is raised, the voltage range of the channel opening shifts to more positive voltages. The inward rectification is mainly due to the blockage of outward current by internal magnesium, This receptor is controlled by G proteins. Unable to produce channel activity when expressed alone. Forms a functional channel in association with KCNJ3/GIRK1. This Homo sapiens (Human) protein is G protein-activated inward rectifier potassium channel 3 (KCNJ9).